The primary structure comprises 346 residues: Phosphoribosylformylglycinamidine cyclo-ligase (346 aa).

This sequence belongs to the AIR synthase family.

Its subcellular location is the cytoplasm. It catalyses the reaction 2-formamido-N(1)-(5-O-phospho-beta-D-ribosyl)acetamidine + ATP = 5-amino-1-(5-phospho-beta-D-ribosyl)imidazole + ADP + phosphate + H(+). It functions in the pathway purine metabolism; IMP biosynthesis via de novo pathway; 5-amino-1-(5-phospho-D-ribosyl)imidazole from N(2)-formyl-N(1)-(5-phospho-D-ribosyl)glycinamide: step 2/2. In Bacillus cereus (strain G9842), this protein is Phosphoribosylformylglycinamidine cyclo-ligase.